A 542-amino-acid polypeptide reads, in one-letter code: Thermosome subunit (542 aa).

The protein belongs to the TCP-1 chaperonin family. In terms of assembly, forms an oligomeric complex of eight-membered rings.

Its function is as follows. Molecular chaperone; binds unfolded polypeptides in vitro, and has a weak ATPase activity. The sequence is that of Thermosome subunit (ths) from Methanocaldococcus jannaschii (strain ATCC 43067 / DSM 2661 / JAL-1 / JCM 10045 / NBRC 100440) (Methanococcus jannaschii).